A 632-amino-acid polypeptide reads, in one-letter code: 1-deoxy-D-xylulose-5-phosphate synthase (632 aa).

Residues histidine 79 and 120–122 (GHA) each bind thiamine diphosphate. A Mg(2+)-binding site is contributed by aspartate 152. Residues 153-154 (GS), asparagine 181, phenylalanine 293, and glutamate 377 contribute to the thiamine diphosphate site. A Mg(2+)-binding site is contributed by asparagine 181.

This sequence belongs to the transketolase family. DXPS subfamily. Homodimer. Requires Mg(2+) as cofactor. The cofactor is thiamine diphosphate.

It catalyses the reaction D-glyceraldehyde 3-phosphate + pyruvate + H(+) = 1-deoxy-D-xylulose 5-phosphate + CO2. The protein operates within metabolic intermediate biosynthesis; 1-deoxy-D-xylulose 5-phosphate biosynthesis; 1-deoxy-D-xylulose 5-phosphate from D-glyceraldehyde 3-phosphate and pyruvate: step 1/1. In terms of biological role, catalyzes the acyloin condensation reaction between C atoms 2 and 3 of pyruvate and glyceraldehyde 3-phosphate to yield 1-deoxy-D-xylulose-5-phosphate (DXP). This chain is 1-deoxy-D-xylulose-5-phosphate synthase, found in Phocaeicola vulgatus (strain ATCC 8482 / DSM 1447 / JCM 5826 / CCUG 4940 / NBRC 14291 / NCTC 11154) (Bacteroides vulgatus).